We begin with the raw amino-acid sequence, 57 residues long: Large ribosomal subunit protein bL32c (57 aa).

This sequence belongs to the bacterial ribosomal protein bL32 family.

Its subcellular location is the plastid. The protein localises to the chloroplast. In Acorus calamus (Sweet flag), this protein is Large ribosomal subunit protein bL32c.